Reading from the N-terminus, the 434-residue chain is Glutamine synthetase leaf isozyme, chloroplastic (434 aa).

Disordered stretches follow at residues 1–33 (MQVR…ARQP) and 101–126 (TISK…GQAP). The N-terminal 54 residues, 1–54 (MQVRRDDDGAGGCAGDAVPGGGEGQDGVPARQPAGRVWGVSRAARATSGFKVLA), are a transit peptide targeting the chloroplast. Positions 10 to 25 (AGGCAGDAVPGGGEGQ) are enriched in gly residues. In terms of domain architecture, GS beta-grasp spans 81 to 161 (IIAEYIWVGG…VICDTYTPQG (81 aa)). Residues 168–434 (KRHMAAQIFS…LAAKKLALKV (267 aa)) form the GS catalytic domain.

It belongs to the glutamine synthetase family. In terms of assembly, homooctamer.

The protein resides in the plastid. It is found in the chloroplast. The enzyme catalyses L-glutamate + NH4(+) + ATP = L-glutamine + ADP + phosphate + H(+). Functionally, the light-modulated chloroplast enzyme, encoded by a nuclear gene and expressed primarily in leaves, is responsible for the reassimilation of the ammonia generated by photorespiration. This is Glutamine synthetase leaf isozyme, chloroplastic from Hordeum vulgare (Barley).